Consider the following 1411-residue polypeptide: Protein ECM5 (1411 aa).

Positions 118 to 159 (IPTFILAKKELPDPIKFYELVEDLGSVYGCVKLKIIPDADKF) constitute a JmjN domain. In terms of domain architecture, ARID spans 185 to 279 (RTKIVDFYAK…ILLDFDIYEE (95 aa)). The segment at 285-312 (RNNEKNEDMVESEIFRHSNSRSRDEEEP) is disordered. The JmjC domain maps to 476 to 695 (KNILDQWNLD…FSSEAAKWTS (220 aa)). The PHD-type zinc-finger motif lies at 1238–1290 (TKYCFCRRVEEGTAMVECEICKEWYHVDCISNGELVPPDDPNVLFVCSICTPP).

It is found in the nucleus. Its function is as follows. May be involved in cell wall organization and biogenesis. The chain is Protein ECM5 (ECM5) from Saccharomyces cerevisiae (strain ATCC 204508 / S288c) (Baker's yeast).